We begin with the raw amino-acid sequence, 131 residues long: Translation initiation factor 5A (131 aa).

K37 carries the hypusine modification.

The protein belongs to the eIF-5A family.

Its subcellular location is the cytoplasm. Its function is as follows. Functions by promoting the formation of the first peptide bond. In Methanococcus maripaludis (strain C5 / ATCC BAA-1333), this protein is Translation initiation factor 5A (eIF5A).